Reading from the N-terminus, the 264-residue chain is Thymidylate synthase (264 aa).

Arginine 21 contacts dUMP. Histidine 51 is a binding site for (6R)-5,10-methylene-5,6,7,8-tetrahydrofolate. 126–127 lines the dUMP pocket; that stretch reads RR. Catalysis depends on cysteine 146, which acts as the Nucleophile. Residues 166-169, asparagine 177, and 207-209 contribute to the dUMP site; these read RSAD and HIY. Aspartate 169 contributes to the (6R)-5,10-methylene-5,6,7,8-tetrahydrofolate binding site. Alanine 263 contributes to the (6R)-5,10-methylene-5,6,7,8-tetrahydrofolate binding site.

Belongs to the thymidylate synthase family. Bacterial-type ThyA subfamily. Homodimer.

Its subcellular location is the cytoplasm. The catalysed reaction is dUMP + (6R)-5,10-methylene-5,6,7,8-tetrahydrofolate = 7,8-dihydrofolate + dTMP. It functions in the pathway pyrimidine metabolism; dTTP biosynthesis. Its function is as follows. Catalyzes the reductive methylation of 2'-deoxyuridine-5'-monophosphate (dUMP) to 2'-deoxythymidine-5'-monophosphate (dTMP) while utilizing 5,10-methylenetetrahydrofolate (mTHF) as the methyl donor and reductant in the reaction, yielding dihydrofolate (DHF) as a by-product. This enzymatic reaction provides an intracellular de novo source of dTMP, an essential precursor for DNA biosynthesis. This chain is Thymidylate synthase, found in Agrobacterium fabrum (strain C58 / ATCC 33970) (Agrobacterium tumefaciens (strain C58)).